A 177-amino-acid chain; its full sequence is MSRVAKAPVAIPAGVEVKLNGQEITVKGAKGELSRVINNAVVIAQEENKLTFGPREGVANAWAQAGTARALVNNMVVGVTEGFTRKLILKGVGYRAAIKGNAVGLTLGFSHPVEHELPAGIKAECPSQTEIVLTGCDKQLIGQVAADIRAYRAPEPYKGKGIRYADENVRSKEAKKK.

This sequence belongs to the universal ribosomal protein uL6 family. As to quaternary structure, part of the 50S ribosomal subunit.

In terms of biological role, this protein binds to the 23S rRNA, and is important in its secondary structure. It is located near the subunit interface in the base of the L7/L12 stalk, and near the tRNA binding site of the peptidyltransferase center. This is Large ribosomal subunit protein uL6 from Vibrio vulnificus (strain CMCP6).